A 661-amino-acid polypeptide reads, in one-letter code: SUMO-activating enzyme subunit 2 (661 aa).

ATP-binding positions include 29-34 (GAGGIG), aspartate 53, 61-64 (NLNR), lysine 77, and 122-127 (DNISAR). 2 residues coordinate Zn(2+): cysteine 163 and cysteine 166. Cysteine 178 functions as the Glycyl thioester intermediate in the catalytic mechanism. Zn(2+) is bound by residues cysteine 436 and cysteine 439. The tract at residues 545-661 (KKQQQKEKDQ…SKKLKSNLQD (117 aa)) is disordered. Over residues 548 to 563 (QQKEKDQKEGKTTTIE) the composition is skewed to basic and acidic residues. 2 stretches are compositionally biased toward low complexity: residues 577–607 (TSQTTTTTTTTTTTTESDNNSNNNKNNNNNN) and 623–634 (SSTTTSSATPSI).

This sequence belongs to the ubiquitin-activating E1 family. As to quaternary structure, heterodimer of sae1 and sae2. The complex binds sumo via sae2.

The protein resides in the nucleus. It participates in protein modification; protein sumoylation. In terms of biological role, the dimeric enzyme acts as an E1 ligase for sumo. It mediates ATP-dependent activation of sumo and formation of a thioester with a conserved cysteine residue on sae2. The polypeptide is SUMO-activating enzyme subunit 2 (uba2) (Dictyostelium discoideum (Social amoeba)).